Consider the following 50-residue polypeptide: Large ribosomal subunit protein bL33A (50 aa).

Belongs to the bacterial ribosomal protein bL33 family.

This is Large ribosomal subunit protein bL33A (rpmG1) from Mycoplasmopsis pulmonis (strain UAB CTIP) (Mycoplasma pulmonis).